The chain runs to 374 residues: 4-hydroxybenzoate polyprenyltransferase, mitochondrial (374 aa).

The N-terminal 63 residues, M1–V63, are a transit peptide targeting the mitochondrion. The Mitochondrial matrix segment spans residues V64–P83. Residues I84–G104 traverse the membrane as a helical segment. At C105–D108 the chain is on the mitochondrial intermembrane side. Residues W109–I129 form a helical membrane-spanning segment. Topologically, residues N130 to D153 are mitochondrial matrix. Residues I154–L174 form a helical membrane-spanning segment. The Mitochondrial intermembrane portion of the chain corresponds to L175–H176. A helical transmembrane segment spans residues L177 to L197. Topologically, residues M198–R200 are mitochondrial matrix. The chain crosses the membrane as a helical span at residues V201 to W221. The Mitochondrial intermembrane portion of the chain corresponds to S222–P230. The helical transmembrane segment at A231–Y251 threads the bilayer. Residues A252–Q277 lie on the Mitochondrial matrix side of the membrane. A helical transmembrane segment spans residues W278–G298. The Mitochondrial intermembrane segment spans residues Q299–T300. Residues L301–V321 traverse the membrane as a helical segment. Residues D322 to K332 lie on the Mitochondrial matrix side of the membrane. Residues F333–Y353 form a helical membrane-spanning segment. Over K354–S374 the chain is Mitochondrial intermembrane.

It belongs to the UbiA prenyltransferase family. Requires Mg(2+) as cofactor.

The protein resides in the mitochondrion inner membrane. It carries out the reaction an all-trans-polyprenyl diphosphate + 4-hydroxybenzoate = a 4-hydroxy-3-(all-trans-polyprenyl)benzoate + diphosphate. It catalyses the reaction all-trans-decaprenyl diphosphate + 4-hydroxybenzoate = 4-hydroxy-3-(all-trans-decaprenyl)benzoate + diphosphate. The enzyme catalyses all-trans-nonaprenyl diphosphate + 4-hydroxybenzoate = 4-hydroxy-3-(all-trans-nonaprenyl)benzoate + diphosphate. The protein operates within cofactor biosynthesis; ubiquinone biosynthesis. Functionally, mediates the second step in the final reaction sequence of coenzyme Q (CoQ) biosynthesis. Catalyzes the prenylation of para-hydroxybenzoate (PHB) with an all-trans polyprenyl group (such as all-trans-nonaprenyl diphosphate). The length of the polyprenyl side chain varies depending on the species, in humans, the side chain is comprised of 10 isoprenyls producing CoQ10 (also known as ubiquinone), whereas rodents predominantly generate CoQ9. However, this specificity is not complete, human tissues have low amounts of CoQ9 and rodent organs contain some CoQ10. Plays a central role in the biosynthesis of CoQ9. CoQ9 is a vital molecule that transports electrons from mitochondrial respiratory chain complexes. CoQs also function as cofactors for uncoupling protein and plays a role as regulator of the extracellularly-induced ceramide-dependent apoptotic pathway. Regulates mitochondrial permeability transition pore (mPTP) opening and ROS production (pivotal events in cell death) in a tissue specific manner. The chain is 4-hydroxybenzoate polyprenyltransferase, mitochondrial from Rattus norvegicus (Rat).